Reading from the N-terminus, the 161-residue chain is Dehydrin DHN3 (161 aa).

The span at 1–12 shows a compositional bias: basic and acidic residues; sequence MEHGHATNRVDE. Positions 1 to 161 are disordered; sequence MEHGHATNRV…KIKEKLPGQH (161 aa). Residues 20–38 are compositionally biased toward gly residues; sequence HGVGTGMGAHGGVGTGAAA. Low complexity-rich tracts occupy residues 93–107 and 115–130; these read DQQQ…HGHT and HGAT…QGHT. A run of 2 repeats spans residues 101 to 123 and 124 to 144. The 2 X approximate tandem repeats stretch occupies residues 101–144; the sequence is YGQHGHTGMTGTGEHGATATGGTYGQQGHTGMTGTGAHGTDGTG. Positions 131–142 are enriched in gly residues; that stretch reads GMTGTGAHGTDG. A compositionally biased stretch (basic and acidic residues) spans 143-161; the sequence is TGEKKGIMDKIKEKLPGQH.

The protein belongs to the plant dehydrin family.

This chain is Dehydrin DHN3 (DHN3), found in Hordeum vulgare (Barley).